Here is a 460-residue protein sequence, read N- to C-terminus: Beta-1,3-xylanase TXYA (460 aa).

Residues 1-22 (MKKLAKMISVATLGACAFQAHA) form the signal peptide. Positions 23–337 (LDGKLVPDQG…LSDPKFIRHS (315 aa)) constitute a GH26 domain. Glutamate 138 serves as the catalytic Proton donor. Glutamate 234 functions as the Nucleophile in the catalytic mechanism. Residues 347–371 (GNSDGGNGGDNGGDNGGDNGGETPE) are disordered. Residues 348 to 366 (NSDGGNGGDNGGDNGGDNG) are compositionally biased toward gly residues. The carbohydrate binding module (CBM) stretch occupies residues 368-460 (ETPENCTDDF…TVTFTNQVCN (93 aa)). 2 disulfides stabilise this stretch: cysteine 373–cysteine 459 and cysteine 404–cysteine 409.

This sequence belongs to the glycosyl hydrolase 26 family.

The enzyme catalyses Random hydrolysis of (1-&gt;3)-beta-D-glycosidic linkages in (1-&gt;3)-beta-D-xylans.. Its activity is regulated as follows. Completely inhibited by Cu(2+), Hg(2+) and N-bromosuccinimide. Strongly inhibited by Ag(+), Zn(2+) and Pb(2+). Moderately inhibited by Fe(3+), Al(3+), Mn(2+), dithiothreitol and p-chloromercuribenzoic acid. Slightly activated by Mg(2+) and Ca(2+). Unaffected by Na(+), K(+), Ba(2+), EDTA, iodoacetic acid and N-ethylmalaimide. Catalyzes the hydrolysis of beta-1,3-xylan into oligosaccharides, mainly xylotriose and xylobiose with smaller amounts of xylotetraose, xylose, xylopentaose and xylohexaose. Weakly active toward beta-1,3-xylotriose, yielding xylose and xylobiose. Converts beta-1,3-xylotetraose into xylotriose, xylobiose and xylose. Converts beta-1,3-xylopentaose into xylotetraose, xylotriose, xylobiose and xylose. Does not hydrolyze xylobiose, p-nitrophenyl-beta-xyloside, beta-1,4-xylan, curdlan or carboxymethylcellulose. The chain is Beta-1,3-xylanase TXYA from Vibrio sp.